A 99-amino-acid chain; its full sequence is UPF0213 protein RBAM_000440 (99 aa).

One can recognise a GIY-YIG domain in the interval 4-79; that stretch reads NSHFFYVLLC…KQLTRKKKEQ (76 aa).

Belongs to the UPF0213 family.

In Bacillus velezensis (strain DSM 23117 / BGSC 10A6 / LMG 26770 / FZB42) (Bacillus amyloliquefaciens subsp. plantarum), this protein is UPF0213 protein RBAM_000440.